Consider the following 200-residue polypeptide: Cysteine-rich venom protein VAR8 (200 aa).

An N-terminal signal peptide occupies residues 1–22 (MILLKLYLTLAAILCQSRGTTS). In terms of domain architecture, SCP spans 41–169 (NKHNDLRRTV…PLKYFLVCQY (129 aa)). 4 disulfide bridges follow: cysteine 77/cysteine 156, cysteine 95/cysteine 170, cysteine 151/cysteine 167, and cysteine 189/cysteine 196.

Belongs to the CRISP family. In terms of processing, contains 8 disulfide bonds. As to expression, expressed by the venom gland.

The protein localises to the secreted. Its function is as follows. Blocks ryanodine receptors, and potassium channels. In Varanus acanthurus (Ridge-tailed monitor), this protein is Cysteine-rich venom protein VAR8.